We begin with the raw amino-acid sequence, 375 residues long: Palmitoyltransferase PFA4 (375 aa).

Residues 1–9 (MAVLVKWPW) are Cytoplasmic-facing. The chain crosses the membrane as a helical span at residues 10-30 (LGVAIPCFLISFTGYFAHFFV). The Lumenal portion of the chain corresponds to 31-33 (LTN). Residues 34–54 (FLSFKELLWFQVSLSMIWISY) traverse the membrane as a helical segment. Topologically, residues 55–121 (WKAIYKNPGR…MNCVGYKNFP (67 aa)) are cytoplasmic. The DHHC domain occupies 78–128 (NYCTKCETYKPERTHHCKRCNQCVLVMDHHCPWTMNCVGYKNFPHFIRFLF). Cys108 functions as the S-palmitoyl cysteine intermediate in the catalytic mechanism. Residues 122-142 (HFIRFLFWIIATTGILLHYFV) traverse the membrane as a helical segment. Topologically, residues 143-164 (KRIKFTWVNRYATANLVSKQEL) are lumenal. A helical membrane pass occupies residues 165–185 (IFLTILTPLDAFILLTISLLF). The Cytoplasmic segment spans residues 186–375 (VRCVKNQIVN…EHFGVDVEVE (190 aa)).

This sequence belongs to the DHHC palmitoyltransferase family. PFA4 subfamily.

Its subcellular location is the endoplasmic reticulum membrane. The catalysed reaction is L-cysteinyl-[protein] + hexadecanoyl-CoA = S-hexadecanoyl-L-cysteinyl-[protein] + CoA. Functionally, mediates the reversible addition of palmitate to target proteins, thereby regulating their membrane association and biological function. The sequence is that of Palmitoyltransferase PFA4 from Eremothecium gossypii (strain ATCC 10895 / CBS 109.51 / FGSC 9923 / NRRL Y-1056) (Yeast).